Reading from the N-terminus, the 150-residue chain is Globin-3 (150 aa).

A Globin domain is found at P11–Y150. Positions 74 and 106 each coordinate heme b.

Belongs to the globin family. In terms of assembly, monomer.

The polypeptide is Globin-3 (Petromyzon marinus (Sea lamprey)).